A 423-amino-acid polypeptide reads, in one-letter code: UDP-N-acetylglucosamine 1-carboxyvinyltransferase (423 aa).

22 to 23 (KN) lines the phosphoenolpyruvate pocket. Arginine 93 provides a ligand contact to UDP-N-acetyl-alpha-D-glucosamine. The active-site Proton donor is the cysteine 117. The residue at position 117 (cysteine 117) is a 2-(S-cysteinyl)pyruvic acid O-phosphothioketal. UDP-N-acetyl-alpha-D-glucosamine is bound by residues aspartate 305 and isoleucine 327.

The protein belongs to the EPSP synthase family. MurA subfamily.

The protein localises to the cytoplasm. The enzyme catalyses phosphoenolpyruvate + UDP-N-acetyl-alpha-D-glucosamine = UDP-N-acetyl-3-O-(1-carboxyvinyl)-alpha-D-glucosamine + phosphate. It participates in cell wall biogenesis; peptidoglycan biosynthesis. Its function is as follows. Cell wall formation. Adds enolpyruvyl to UDP-N-acetylglucosamine. In Acidithiobacillus ferrooxidans (strain ATCC 23270 / DSM 14882 / CIP 104768 / NCIMB 8455) (Ferrobacillus ferrooxidans (strain ATCC 23270)), this protein is UDP-N-acetylglucosamine 1-carboxyvinyltransferase.